The primary structure comprises 348 residues: Alpha-2-HS-glycoprotein (348 aa).

The N-terminal stretch at 1–18 (MKTLVLLLCFTLLWGCQS) is a signal peptide. One can recognise a Cystatin fetuin-A-type 1 domain in the interval 19–133 (APQGTGLGFR…QFSVMHTKCH (115 aa)). 6 disulfides stabilise this stretch: Cys-32-Cys-339, Cys-89-Cys-100, Cys-114-Cys-132, Cys-146-Cys-149, Cys-208-Cys-219, and Cys-230-Cys-247. The N-linked (GlcNAc...) asparagine glycan is linked to Asn-99. Ser-134 and Ser-138 each carry phosphoserine. The Cystatin fetuin-A-type 2 domain maps to 144–255 (KVCPHCALLT…TCTAFPTQAN (112 aa)). N-linked (GlcNAc...) asparagine glycosylation is found at Asn-156 and Asn-176. Residues Ser-307, Ser-311, Ser-314, and Ser-316 each carry the phosphoserine modification.

It belongs to the fetuin family. In terms of processing, phosphorylated by FAM20C in the extracellular medium. In terms of tissue distribution, expressed by the liver and secreted in plasma.

It localises to the secreted. In Meriones unguiculatus (Mongolian jird), this protein is Alpha-2-HS-glycoprotein (AHSG).